Consider the following 946-residue polypeptide: MSQTITSLDPNCVIVFNKTSSANEKSLNVEFKRLNIHSIIEPGHDLQTSYAFIRIHQDNAKPLFSFLQNLDFIESIIPYHDTELSDDLHKLISISKSKILEAPKQYELYNLSNLTNNPKQSLYFAFLQNYIKWLIPFSFFGLSIRFLSNFTYEFNSTYSLFAILWTLSFTAFWLYKYEPFWSDRLSKYSSFSTIEFLQDKQKAQKKASSVIMLKKCCFIPVALLFGAILLSFQLYCFALEIFIKQIYNGPMISILSFLPTILICTFTPVLTVIYNKYFVEPMTKWENHSSVVNAKKSKEAKNFVIIFLSSYVPLLITLFLYLPMGHLLTAEIRTKVFNAFSILARLPTHDSDFIIDTKRYEDQFFYFIVINQLIQFSMENFVPSLVSIAQQKINGPNPNFVKAESEIGKAQLSSSDMKIWSKVKSYQTDPWGATFDLDANFKKLLLQFGYLVMFSTIWPLAPFICLIVNLIVYQVDLRKAVLYSKPEYFPFPIYDKPSSVSNTQKLTVGLWNSVLVMFSILGCVITATLTYMYQSCNIPGVGAHTSIHTNKAWYLANPINHSWINIVLYAVFIEHVSVAIFFLFSSILKSSHDDVANGIVPKHVVNVQNPPKQEVFEKIPSPEFNSNNEKELVQRKGSANEKLHQELGEKQPASSANGYEAHAATHANNDPSSLSSASSPSLSSSSSSSKTGVVKAVDNDTAGSAGKKPLATESTEKRNSLVKVPTVGSYGVAGATLPETIPTSKNYYLRFDEDGKSIRDAKSSAESSNATNNNTLGTESKLLPDGDAVDALSRKIDQIPKIAVTGGENNENTQAKDDAATKTPLIKDANIKPVVNAAVNDNQSKVSVATEQTKKTEVSTKNGPSRSISTKETKDSARPSNNNTTTTTTTDATQPHHHHHHHRHRDAGVKNVTNNSKTTESSSSSSAAKEKPKHKKGLLHKLKKKL.

At 1-121 the chain is on the cytoplasmic side; that stretch reads MSQTITSLDP…SNLTNNPKQS (121 aa). The helical transmembrane segment at 122-142 threads the bilayer; the sequence is LYFAFLQNYIKWLIPFSFFGL. Topologically, residues 143–153 are extracellular; it reads SIRFLSNFTYE. A helical transmembrane segment spans residues 154-174; that stretch reads FNSTYSLFAILWTLSFTAFWL. The Cytoplasmic segment spans residues 175–217; that stretch reads YKYEPFWSDRLSKYSSFSTIEFLQDKQKAQKKASSVIMLKKCC. A helical transmembrane segment spans residues 218–238; sequence FIPVALLFGAILLSFQLYCFA. Over 239 to 253 the chain is Extracellular; that stretch reads LEIFIKQIYNGPMIS. The chain crosses the membrane as a helical span at residues 254–274; sequence ILSFLPTILICTFTPVLTVIY. Topologically, residues 275–302 are cytoplasmic; sequence NKYFVEPMTKWENHSSVVNAKKSKEAKN. Residues 303–323 traverse the membrane as a helical segment; it reads FVIIFLSSYVPLLITLFLYLP. Residues 324 to 447 are Extracellular-facing; sequence MGHLLTAEIR…DANFKKLLLQ (124 aa). Residues 448 to 468 form a helical membrane-spanning segment; the sequence is FGYLVMFSTIWPLAPFICLIV. The Cytoplasmic portion of the chain corresponds to 469–505; it reads NLIVYQVDLRKAVLYSKPEYFPFPIYDKPSSVSNTQK. The helical transmembrane segment at 506–526 threads the bilayer; that stretch reads LTVGLWNSVLVMFSILGCVIT. Topologically, residues 527–563 are extracellular; sequence ATLTYMYQSCNIPGVGAHTSIHTNKAWYLANPINHSW. Residues 564-584 traverse the membrane as a helical segment; it reads INIVLYAVFIEHVSVAIFFLF. Residues 585–946 are Cytoplasmic-facing; it reads SSILKSSHDD…GLLHKLKKKL (362 aa). Disordered regions lie at residues 617–638 and 665–718; these read EKIP…RKGS and THAN…TEKR. The span at 628–638 shows a compositional bias: basic and acidic residues; it reads NEKELVQRKGS. Ser638 is modified (phosphoserine). A compositionally biased stretch (low complexity) spans 671-689; the sequence is PSSLSSASSPSLSSSSSSS. Thr701 is modified (phosphothreonine). Phosphoserine occurs at positions 704 and 720. Thr726 carries the post-translational modification Phosphothreonine. Residue Ser729 is modified to Phosphoserine. The residue at position 730 (Tyr730) is a Phosphotyrosine. Position 757 is a phosphoserine (Ser757). The disordered stretch occupies residues 759 to 784; it reads RDAKSSAESSNATNNNTLGTESKLLP. Residues 764 to 775 show a composition bias toward low complexity; it reads SAESSNATNNNT. Residues Ser793, Ser844, and Ser847 each carry the phosphoserine modification. Residues 846 to 946 form a disordered region; the sequence is VSVATEQTKK…GLLHKLKKKL (101 aa). Thr850 bears the Phosphothreonine mark. Residues 859 to 868 are compositionally biased toward polar residues; it reads STKNGPSRSI. A compositionally biased stretch (low complexity) spans 884–893; that stretch reads TTTTTTTDAT. Residues 895–905 show a composition bias toward basic residues; the sequence is PHHHHHHHRHR. The span at 916–927 shows a compositional bias: low complexity; the sequence is SKTTESSSSSSA. Residues 931–946 are compositionally biased toward basic residues; it reads KPKHKKGLLHKLKKKL.

In terms of assembly, interacts with BTN2.

The protein resides in the cell membrane. May be involved in ion homeostasis together with BTN1 or BTN2. The sequence is that of Increased sodium tolerance protein 2 (IST2) from Saccharomyces cerevisiae (strain ATCC 204508 / S288c) (Baker's yeast).